The sequence spans 319 residues: Ficolin-2 (319 aa).

Residues methionine 1–alanine 22 form the signal peptide. A Collagen-like domain is found at glycine 45 to serine 101. Positions leucine 53–threonine 106 are disordered. The segment covering lysine 83–aspartate 97 has biased composition (basic and acidic residues). The 218-residue stretch at glutamine 102 to isoleucine 319 folds into the Fibrinogen C-terminal domain. Cystine bridges form between cysteine 104–cysteine 132 and cysteine 111–cysteine 139. Residues aspartate 255, aspartate 257, and serine 261 each contribute to the Ca(2+) site. Cysteines 263 and 276 form a disulfide. An N-linked (GlcNAc...) asparagine glycan is attached at asparagine 306.

It belongs to the ficolin lectin family. Homotrimer. Interacts with elastin. Interacts with MASP1 and MASP2.

Its subcellular location is the secreted. May function in innate immunity through activation of the lectin complement pathway. Calcium-dependent and GlcNAc-binding lectin. The protein is Ficolin-2 (Fcn2) of Rattus norvegicus (Rat).